A 208-amino-acid polypeptide reads, in one-letter code: MARYTDASCRLCRREGEKLFLKGERCYTDKCSVARRPYAPGQHGQGRKKMSEYGIQLREKAKVRRFYGVLEGQFSKYFEVASRRKGITGENLLQILETRLDNVVYRLGLGTSRPESRQLVTHGHFTVNGKRVNIPSYLIKVGDVIAVADNSKNSPKVKSIREIAGGKVIPKWLEFDEENLVGKVVALPAREDIDLPIKEHLIVELYSK.

In terms of domain architecture, S4 RNA-binding spans 98–164 (TRLDNVVYRL…PKVKSIREIA (67 aa)).

The protein belongs to the universal ribosomal protein uS4 family. Part of the 30S ribosomal subunit. Contacts protein S5. The interaction surface between S4 and S5 is involved in control of translational fidelity.

Functionally, one of the primary rRNA binding proteins, it binds directly to 16S rRNA where it nucleates assembly of the body of the 30S subunit. Its function is as follows. With S5 and S12 plays an important role in translational accuracy. The polypeptide is Small ribosomal subunit protein uS4 (Ruminiclostridium cellulolyticum (strain ATCC 35319 / DSM 5812 / JCM 6584 / H10) (Clostridium cellulolyticum)).